A 373-amino-acid polypeptide reads, in one-letter code: MSEKKINLLDLDRKAMRALFADLGEKPFRADQLMKWIYHFGVSDFEEMTNINKVLRQKLAARCEIVAPEISSFQKSTDGTIKFAIHVGEGQEVETVYIPEDDRATLCVSSQVGCALECTFCSTAQQGFNRNLTVSEIVGQIWRVSHFLGFAKDTGDRPITNVVMMGMGEPLLNLANVIPAMDIMLDDFGFSLSKRRVTLSTSGVVPALDKLGDALDVALAVSIHAPNDELRDILVPVNKKYPLQEFLAGIRRYIAKSNANRGRVTVEYVMLDHINDSTEQAHELAKLMKDTPCKVNLIPFNPYPGSPYGRSSNSRIDRFSKVLMEYGLTVIVRKTRGDDIDAACGQLAGDIRDRTKRLAKKRMQENQISVTMN.

Glu-94 (proton acceptor) is an active-site residue. Positions 100–339 constitute a Radical SAM core domain; the sequence is EDDRATLCVS…VIVRKTRGDD (240 aa). Cysteines 107 and 344 form a disulfide. [4Fe-4S] cluster is bound by residues Cys-114, Cys-118, and Cys-121. Residues 168–169, Ser-200, 222–224, and Asn-301 contribute to the S-adenosyl-L-methionine site; these read GE and SIH. Residue Cys-344 is the S-methylcysteine intermediate of the active site.

This sequence belongs to the radical SAM superfamily. RlmN family. Requires [4Fe-4S] cluster as cofactor.

The protein localises to the cytoplasm. The enzyme catalyses adenosine(2503) in 23S rRNA + 2 reduced [2Fe-2S]-[ferredoxin] + 2 S-adenosyl-L-methionine = 2-methyladenosine(2503) in 23S rRNA + 5'-deoxyadenosine + L-methionine + 2 oxidized [2Fe-2S]-[ferredoxin] + S-adenosyl-L-homocysteine. It catalyses the reaction adenosine(37) in tRNA + 2 reduced [2Fe-2S]-[ferredoxin] + 2 S-adenosyl-L-methionine = 2-methyladenosine(37) in tRNA + 5'-deoxyadenosine + L-methionine + 2 oxidized [2Fe-2S]-[ferredoxin] + S-adenosyl-L-homocysteine. Specifically methylates position 2 of adenine 2503 in 23S rRNA and position 2 of adenine 37 in tRNAs. m2A2503 modification seems to play a crucial role in the proofreading step occurring at the peptidyl transferase center and thus would serve to optimize ribosomal fidelity. The chain is Dual-specificity RNA methyltransferase RlmN from Shewanella sp. (strain W3-18-1).